Reading from the N-terminus, the 2148-residue chain is Polyketide synthase 1 (2148 aa).

The N-terminal acylcarrier protein transacylase domain (SAT) stretch occupies residues 19 to 261 (FIFGDQSSCN…TPLAVHAPYH (243 aa)). A Ketosynthase family 3 (KS3) domain is found at 394 to 829 (ESKIAIIGMS…GGNTALLVED (436 aa)). Catalysis depends on for beta-ketoacyl synthase activity residues Cys566, His701, and His745. The interval 929-1233 (AFVFSGQGSQ…PSLMRNKDGW (305 aa)) is malonyl-CoA:ACP transacylase (MAT) domain. Ser1018 acts as the For acyl/malonyl transferase activity in catalysis. A product template (PT) domain region spans residues 1310–1624 (TASVHRIVHE…RKVLNTAMPP (315 aa)). Residues 1314 to 1447 (HRIVHESVEK…SSLHFEQPKV (134 aa)) form an N-terminal hotdog fold region. The PKS/mFAS DH domain occupies 1314-1619 (HRIVHESVEK…FQGIPRKVLN (306 aa)). His1346 functions as the Proton acceptor; for dehydratase activity in the catalytic mechanism. The tract at residues 1474 to 1619 (LNSRMSSGVI…FQGIPRKVLN (146 aa)) is C-terminal hotdog fold. The Proton donor; for dehydratase activity role is filled by Asp1533. Positions 1619–1655 (NTAMPPPKSQNEAPVRSGPAKPAAKPPRSASSEHSGH) are disordered. The span at 1634–1650 (RSGPAKPAAKPPRSASS) shows a compositional bias: low complexity. In terms of domain architecture, Carrier 1 spans 1678–1752 (RNPMLPVFKI…DLAAHLGLDT (75 aa)). Position 1712 is an O-(pantetheine 4'-phosphoryl)serine (Ser1712). Low complexity-rich tracts occupy residues 1757 to 1769 (QSSG…GGLS) and 1779 to 1796 (TSSV…SVSG). The tract at residues 1757–1796 (QSSGQSSSFGGLSPRSDSIGEITSSVTTPPSLSPRSSVSG) is disordered. The Carrier 2 domain maps to 1793-1870 (SVSGSQCKDV…SFKHMFQQGH (78 aa)). Residue Ser1830 is modified to O-(pantetheine 4'-phosphoryl)serine. The thioesterase (TE) domain stretch occupies residues 1882–2146 (LKQYRATSTL…ERVAAFIRST (265 aa)). Ser1973 acts as the For thioesterase activity in catalysis.

In terms of biological role, polyketide synthase; part of the Pks1 gene cluster that mediates the biosynthesis of an anthraquinone derivative pigment that contributes to conidial pigmentation that provides protection from UV radiation, heat and cold stress. The polyketide synthase Pks1 produces 1-acetyl-2,4,6,8-tetrahydroxy-9,10-anthraquinone though condensation of acetyl-CoA with malonyl-CoA. The dehydratase EthD and the laccase Mlac1 further convert the anthraquinone derivative into the final conidial pigment. This Metarhizium anisopliae (strain ARSEF 549) protein is Polyketide synthase 1.